The following is an 83-amino-acid chain: Exodeoxyribonuclease 7 small subunit (83 aa).

Belongs to the XseB family. In terms of assembly, heterooligomer composed of large and small subunits.

Its subcellular location is the cytoplasm. The catalysed reaction is Exonucleolytic cleavage in either 5'- to 3'- or 3'- to 5'-direction to yield nucleoside 5'-phosphates.. Bidirectionally degrades single-stranded DNA into large acid-insoluble oligonucleotides, which are then degraded further into small acid-soluble oligonucleotides. This chain is Exodeoxyribonuclease 7 small subunit, found in Rhodopseudomonas palustris (strain ATCC BAA-98 / CGA009).